Consider the following 114-residue polypeptide: Fumarate reductase subunit D (114 aa).

Transmembrane regions (helical) follow at residues 24 to 44, 50 to 70, and 92 to 112; these read VSAIFFPVVILIIGLLLPFGL, LITFAYSWIGKLVILVLTIFP, and GGFIFYGLATIYTVWVLFAVI.

The protein belongs to the FrdD family. In terms of assembly, part of an enzyme complex containing four subunits: a flavoprotein (FrdA), an iron-sulfur protein (FrdB), and two hydrophobic anchor proteins (FrdC and FrdD).

It is found in the cell inner membrane. In terms of biological role, anchors the catalytic components of the fumarate reductase complex to the cell membrane, binds quinones. The protein is Fumarate reductase subunit D of Haemophilus influenzae (strain PittEE).